The following is a 358-amino-acid chain: Chorismate synthase (358 aa).

Arg47 contacts NADP(+). FMN contacts are provided by residues 124–126 (RSS), 240–241 (NA), Gly284, 299–303 (KPVAT), and Arg325.

It belongs to the chorismate synthase family. In terms of assembly, homotetramer. FMNH2 is required as a cofactor.

It catalyses the reaction 5-O-(1-carboxyvinyl)-3-phosphoshikimate = chorismate + phosphate. Its pathway is metabolic intermediate biosynthesis; chorismate biosynthesis; chorismate from D-erythrose 4-phosphate and phosphoenolpyruvate: step 7/7. Its function is as follows. Catalyzes the anti-1,4-elimination of the C-3 phosphate and the C-6 proR hydrogen from 5-enolpyruvylshikimate-3-phosphate (EPSP) to yield chorismate, which is the branch point compound that serves as the starting substrate for the three terminal pathways of aromatic amino acid biosynthesis. This reaction introduces a second double bond into the aromatic ring system. This chain is Chorismate synthase, found in Phocaeicola vulgatus (strain ATCC 8482 / DSM 1447 / JCM 5826 / CCUG 4940 / NBRC 14291 / NCTC 11154) (Bacteroides vulgatus).